The sequence spans 479 residues: Glycogen synthase (479 aa).

An ADP-alpha-D-glucose-binding site is contributed by K16.

Belongs to the glycosyltransferase 1 family. Bacterial/plant glycogen synthase subfamily.

The enzyme catalyses [(1-&gt;4)-alpha-D-glucosyl](n) + ADP-alpha-D-glucose = [(1-&gt;4)-alpha-D-glucosyl](n+1) + ADP + H(+). Its pathway is glycan biosynthesis; glycogen biosynthesis. Synthesizes alpha-1,4-glucan chains using ADP-glucose. This is Glycogen synthase from Lactiplantibacillus plantarum (strain ATCC BAA-793 / NCIMB 8826 / WCFS1) (Lactobacillus plantarum).